The primary structure comprises 373 residues: 3-isopropylmalate dehydrogenase AMT6 (373 aa).

77–79 (VGG) provides a ligand contact to NADP(+). Residues R97 and R136 each coordinate substrate. Mg(2+) is bound by residues D227, D252, and D256. Position 284 to 289 (284 to 289 (SRIRGL)) interacts with NADP(+).

It belongs to the isocitrate and isopropylmalate dehydrogenases family. In terms of assembly, homodimer. The cofactor is Mg(2+). Mn(2+) serves as cofactor.

It catalyses the reaction (2R,3S)-3-isopropylmalate + NAD(+) = 4-methyl-2-oxopentanoate + CO2 + NADH. It functions in the pathway amino-acid biosynthesis; L-leucine biosynthesis; L-leucine from 3-methyl-2-oxobutanoate: step 3/4. The protein operates within mycotoxin biosynthesis. Functionally, 3-isopropylmalate dehydrogenase; part of the gene clusters that mediate the biosynthesis of AM-toxins, host-selective toxins (HSTs) causing Alternaria blotch on apple, a worldwide distributed disease. AM-toxins are cyclic depsipeptides containing the 3 residues 2-hydroxy-isovaleric acid (2-HIV), dehydroalanine, L-alanine which are common for all 3 AM-toxins I to III. The fourth precursor is L-alpha-amino-methoxyphenyl-valeric acid (L-Amv) for AM-toxin I, L-alpha-amino-phenyl-valeric acid (L-Apv) for AM-toxin II, and L-alpha-amino-hydroxyphenyl-valeric acid (L-Ahv) for AM-toxin III. AM-toxins have two target sites for affecting susceptible apple cells; they cause invagination of the plasma membrane and electrolyte loss and chloroplast disorganization. The non-ribosomal peptide synthetase AMT1 contains 4 catalytic modules and is responsible for activation of each residue in AM-toxin. The aldo-keto reductase AMT2 catalyzes the conversion of 2-keto-isovaleric acid (2-KIV) to 2-hydroxy-isovaleric acid (2-HIV), one of the precursor residues incorporated by AMT1 during AM-toxin biosynthesis, by reduction of its ketone to an alcohol. The cytochrome P450 monooxygenase AMT3 and the thioesterase AMT4 are also important for AM-toxin production, but their exact function within the AM-toxin biosynthesis are not known yet. Up to 21 proteins (including AMT1 to AMT4) are predicted to be involved in AM-toxin biosynthesis since their expression ishighly up-regulated in AM-toxin-producing cultures. This Alternaria alternata (Alternaria rot fungus) protein is 3-isopropylmalate dehydrogenase AMT6.